A 139-amino-acid chain; its full sequence is Large-conductance mechanosensitive channel 1 (139 aa).

Transmembrane regions (helical) follow at residues 8–28 (FISK…AAFG), 30–50 (IVDS…FGGL), and 81–101 (GSFI…FLMV).

It belongs to the MscL family. As to quaternary structure, homopentamer.

The protein resides in the cell inner membrane. Channel that opens in response to stretch forces in the membrane lipid bilayer. May participate in the regulation of osmotic pressure changes within the cell. The protein is Large-conductance mechanosensitive channel 1 of Mesorhizobium japonicum (strain LMG 29417 / CECT 9101 / MAFF 303099) (Mesorhizobium loti (strain MAFF 303099)).